Here is a 121-residue protein sequence, read N- to C-terminus: Small ribosomal subunit protein uS13 (121 aa).

The segment at 97–121 (VRGQRTRTNARTRRGARKTVAGKKK) is disordered. A compositionally biased stretch (basic residues) spans 100–121 (QRTRTNARTRRGARKTVAGKKK).

This sequence belongs to the universal ribosomal protein uS13 family. As to quaternary structure, part of the 30S ribosomal subunit. Forms a loose heterodimer with protein S19. Forms two bridges to the 50S subunit in the 70S ribosome.

Functionally, located at the top of the head of the 30S subunit, it contacts several helices of the 16S rRNA. In the 70S ribosome it contacts the 23S rRNA (bridge B1a) and protein L5 of the 50S subunit (bridge B1b), connecting the 2 subunits; these bridges are implicated in subunit movement. Contacts the tRNAs in the A and P-sites. The protein is Small ribosomal subunit protein uS13 of Synechococcus sp. (strain CC9902).